A 222-amino-acid polypeptide reads, in one-letter code: Large ribosomal subunit protein uL1 (222 aa).

Belongs to the universal ribosomal protein uL1 family. As to quaternary structure, part of the 50S ribosomal subunit.

In terms of biological role, binds directly to 23S rRNA. Probably involved in E site tRNA release. Protein L1 is also a translational repressor protein, it controls the translation of its operon by binding to its mRNA. In Pyrobaculum aerophilum (strain ATCC 51768 / DSM 7523 / JCM 9630 / CIP 104966 / NBRC 100827 / IM2), this protein is Large ribosomal subunit protein uL1.